Reading from the N-terminus, the 102-residue chain is Small ribosomal subunit protein uS10 (102 aa).

Belongs to the universal ribosomal protein uS10 family. As to quaternary structure, part of the 30S ribosomal subunit.

Involved in the binding of tRNA to the ribosomes. The chain is Small ribosomal subunit protein uS10 from Sulfolobus acidocaldarius (strain ATCC 33909 / DSM 639 / JCM 8929 / NBRC 15157 / NCIMB 11770).